The chain runs to 367 residues: Glycerol dehydrogenase (367 aa).

5 residues coordinate NAD(+): Asp37, Gly94, Lys95, Thr116, and Ser119. Asp121 is a binding site for glycerol. Ser125, Leu127, and Tyr131 together coordinate NAD(+). Residues Asp171, His254, and His271 each coordinate Zn(2+). His254 is a binding site for glycerol.

It belongs to the iron-containing alcohol dehydrogenase family. Zn(2+) serves as cofactor.

The enzyme catalyses glycerol + NAD(+) = dihydroxyacetone + NADH + H(+). Its pathway is polyol metabolism; glycerol fermentation; glycerone phosphate from glycerol (oxidative route): step 1/2. Catalyzes the NAD-dependent oxidation of glycerol to dihydroxyacetone (glycerone). Allows microorganisms to utilize glycerol as a source of carbon under anaerobic conditions. This is Glycerol dehydrogenase (gldA) from Escherichia coli O6:H1 (strain CFT073 / ATCC 700928 / UPEC).